The chain runs to 269 residues: Formamidopyrimidine-DNA glycosylase (269 aa).

The active-site Schiff-base intermediate with DNA is the P2. The active-site Proton donor is E3. The Proton donor; for beta-elimination activity role is filled by K57. Positions 90, 109, and 150 each coordinate DNA. Residues 235 to 269 (QVYGRKGEPCRVCGTPIVATKHAQRATFYCRHCQK) form an FPG-type zinc finger. The active-site Proton donor; for delta-elimination activity is the R259.

It belongs to the FPG family. Monomer. It depends on Zn(2+) as a cofactor.

The catalysed reaction is Hydrolysis of DNA containing ring-opened 7-methylguanine residues, releasing 2,6-diamino-4-hydroxy-5-(N-methyl)formamidopyrimidine.. It carries out the reaction 2'-deoxyribonucleotide-(2'-deoxyribose 5'-phosphate)-2'-deoxyribonucleotide-DNA = a 3'-end 2'-deoxyribonucleotide-(2,3-dehydro-2,3-deoxyribose 5'-phosphate)-DNA + a 5'-end 5'-phospho-2'-deoxyribonucleoside-DNA + H(+). Its function is as follows. Involved in base excision repair of DNA damaged by oxidation or by mutagenic agents. Acts as a DNA glycosylase that recognizes and removes damaged bases. Has a preference for oxidized purines, such as 7,8-dihydro-8-oxoguanine (8-oxoG). Has AP (apurinic/apyrimidinic) lyase activity and introduces nicks in the DNA strand. Cleaves the DNA backbone by beta-delta elimination to generate a single-strand break at the site of the removed base with both 3'- and 5'-phosphates. This is Formamidopyrimidine-DNA glycosylase from Salmonella choleraesuis (strain SC-B67).